Here is a 99-residue protein sequence, read N- to C-terminus: uncharacterized protein (99 aa).

The 48-residue stretch at 32–79 folds into the TM2 domain; sequence KKSVGIAVLLSFIIPGAGQMYLGRVGKGIILLLTCWLIIPWIYSIYDA. The next 2 helical transmembrane spans lie at 34–54 and 56–76; these read SVGI…MYLG and VGKG…IYSI.

It localises to the cell membrane. This is an uncharacterized protein from Methanocaldococcus jannaschii (strain ATCC 43067 / DSM 2661 / JAL-1 / JCM 10045 / NBRC 100440) (Methanococcus jannaschii).